Reading from the N-terminus, the 138-residue chain is ATP synthase epsilon chain (138 aa).

It belongs to the ATPase epsilon chain family. In terms of assembly, F-type ATPases have 2 components, CF(1) - the catalytic core - and CF(0) - the membrane proton channel. CF(1) has five subunits: alpha(3), beta(3), gamma(1), delta(1), epsilon(1). CF(0) has three main subunits: a, b and c.

Its subcellular location is the cell membrane. Produces ATP from ADP in the presence of a proton gradient across the membrane. This is ATP synthase epsilon chain from Streptococcus suis (strain 98HAH33).